The following is an 848-amino-acid chain: DNA mismatch repair protein MutS (848 aa).

605–612 (GPNMAGKS) is an ATP binding site.

The protein belongs to the DNA mismatch repair MutS family.

Functionally, this protein is involved in the repair of mismatches in DNA. It is possible that it carries out the mismatch recognition step. This protein has a weak ATPase activity. This chain is DNA mismatch repair protein MutS, found in Leptospira interrogans serogroup Icterohaemorrhagiae serovar copenhageni (strain Fiocruz L1-130).